A 701-amino-acid chain; its full sequence is Polyribonucleotide nucleotidyltransferase (701 aa).

Mg(2+) is bound by residues Asp487 and Asp493. A KH domain is found at 554–613 (PTMIAMKIDTDKIRDVIGKGGATIRAICEETKASIDIEDDGSIKIFGETKEAAEAARQRV). The region spanning 623–691 (GKIYVGKVER…NRGRIKLSIK (69 aa)) is the S1 motif domain.

The protein belongs to the polyribonucleotide nucleotidyltransferase family. In terms of assembly, component of the RNA degradosome, which is a multiprotein complex involved in RNA processing and mRNA degradation. Mg(2+) serves as cofactor.

The protein localises to the cytoplasm. It catalyses the reaction RNA(n+1) + phosphate = RNA(n) + a ribonucleoside 5'-diphosphate. Involved in mRNA degradation. Catalyzes the phosphorolysis of single-stranded polyribonucleotides processively in the 3'- to 5'-direction. The polypeptide is Polyribonucleotide nucleotidyltransferase (Pseudomonas putida (strain W619)).